Reading from the N-terminus, the 862-residue chain is MPRQSISKESPTMTTPMMQQYKSIKSQAPDAILFFRLGDFYEMFGEDARTAAPILEIALTGRDSGGGERIPMCGVPHHAVDGYLLKLVSAGYKVALCEQVEDPQAAKGIVKREIIRIISPGTLTDSLVEQANNFLAAVYHEQDWGLAFVDVSTGEFTVFQTESLDILTTELSRIRPSELLLPAELLKAKHWRPYYLTQREKKTYQHTLLEERFTEQRELFQEFPTAMKAANGLWQYILETSPGIDPSHILKVNAYRPEHWMLLDPWTRRNLELTESIRGQGKKGTLLSVLDFTKTAFGGRLLRRWIEQPLLLKGEIEKRLDYVEALVEDSFLRGDLIQLFGKVYDLERLMGKVSYGTANARDLLSLAQTLGVLPQLRALLAEGKSEPLQAFIPALEGLDPLAATLEQAINPEAPISLKDGNLLKAGYSVEIDELRSISSGGKAWVAKLESMEKDRTGIRSLKVGYNKVFGYYIEVTHANSHLIPAEYIRKQTLANAERFITPELKEYEQKILGAEEKVTQLEYQLFLELRETVRGQAAKILEAAHALAEIDVYTSLAEAAVRHHYSRPVMKGEGGLTIIEGRHPVVESMLQDTSFVPNDTILTEDKHLALITGPNMAGKSTYMRQVALIVLMAQIGSFVPAQQATIPIADHIFTRVGASDDLASGQSTFMVEMYEVAHILRHVTPQSLIILDEVGRGTATYDGLSIAWAVAEYLAGQENKPKTLFATHYHELTDLEETHSGIFNLHVGVREHGEEIVFLHKIIPGRADRSYGIQVAKLAGLPANLLHRAKIILHELESSAKESRQEHLFNKEKATQLSLFEVQPLDPLLQEVSELSVEDLTPRQALDYLFDLKERIKAADSL.

Residue G613–S620 coordinates ATP.

It belongs to the DNA mismatch repair MutS family.

Functionally, this protein is involved in the repair of mismatches in DNA. It is possible that it carries out the mismatch recognition step. This protein has a weak ATPase activity. The chain is DNA mismatch repair protein MutS from Desulfitobacterium hafniense (strain Y51).